A 1166-amino-acid chain; its full sequence is Reverse gyrase 2 (1166 aa).

The RG N-terminal-type zinc finger occupies 1-40; sequence MINVMYKNSCPNCGGDISGDRLLNGLPCEACLPYINGIDD. The Zn(2+) site is built by cysteine 10, cysteine 13, cysteine 28, and cysteine 31. Residues glutamine 92 and 109 to 116 contribute to the ATP site; that span reads APTGLGKT. The 190-residue stretch at 96-285 folds into the Helicase ATP-binding domain; the sequence is LRRLASNQSF…ALRLLTGFEP (190 aa). The DEAD box motif lies at 190–193; it reads DDAD. The tract at residues 576–1166 is topoisomerase I; it reads FNISTGLLIV…VNPLKSEQNV (591 aa). Positions 580–743 constitute a Toprim domain; sequence TGLLIVESPT…NVYRVVYHEI (164 aa). Residue glutamate 586 coordinates Mg(2+). The segment at 662-689 adopts an RG C-terminal-type zinc-finger fold; that stretch reads IKKCLDCNKIFSSASDKCPYCGSANLQS. Cysteine 665, cysteine 668, cysteine 679, and cysteine 682 together coordinate Zn(2+). Aspartate 712 contacts Mg(2+). The 399-residue stretch at 759–1157 folds into the Topo IA-type catalytic domain; the sequence is NTNLVMSQIV…EIFSEISTLV (399 aa). Tyrosine 903 functions as the O-(5'-phospho-DNA)-tyrosine intermediate in the catalytic mechanism.

In the N-terminal section; belongs to the DEAD box helicase family. DDVD subfamily. The protein in the C-terminal section; belongs to the type IA topoisomerase family. In terms of assembly, monomer. It depends on Zn(2+) as a cofactor. Mg(2+) is required as a cofactor.

The protein resides in the cytoplasm. The catalysed reaction is ATP + H2O = ADP + phosphate + H(+). Its activity is regulated as follows. At least one of the 2 proteins is inhibited by actinomycin D. Less sensitive to NaCl than TopR1, maximal positive supercoiling is observed with 100 mM NaCl; as NaCl rises higher than 400 mM supercoiling decreases. At 600 mM NaCl relaxes but does not introduce positive supercoils into negatively supercoiled substrate. Functionally, modifies the topological state of DNA by introducing positive supercoils in an ATP-dependent process. A highly processive enzyme, it introduces a large number of positive supercoils directly in a negatively supercoiled substrate. At 75 degrees Celsius introduces more than 23 positive supercoils into pTZ18R DNA (probably 2860 bp), more than TopR1; unlike TopR1 little to no relaxation of the negatively supercoiled substrate is seen in the presence of ATP, in the absence of ATP no activity is seen. At 45 degrees Celsius the enzyme is slower and in vitro individual steps can be detected. It cleaves transiently a single DNA strand and remains covalently bound to the 5' DNA end through a tyrosine residue. May be involved in DNA damage response. May be involved in rewinding the DNA strands in the regions of the chromosome that have opened up to allow transcription or replication. There are 2 genes for this protein in the cell. During exponential growth this is the more highly expressed isoform (about 125 molecules per cell at 80 degrees Celsius, about 117 molecules at 88 degrees Celsius); this isoform is less active at higher temperature. Grows actively at both 80 and 88 degrees Celsius; survives a long exposure at 45 degrees Celsius without DNA replication or cell division occurring. Experiments using whole cell extracts do not distinguish which isoform is present, the results are probably a mixture of the two forms. In Saccharolobus solfataricus (strain ATCC 35092 / DSM 1617 / JCM 11322 / P2) (Sulfolobus solfataricus), this protein is Reverse gyrase 2.